We begin with the raw amino-acid sequence, 341 residues long: Holliday junction branch migration complex subunit RuvB (341 aa).

The large ATPase domain (RuvB-L) stretch occupies residues Met1 to Tyr180. ATP contacts are provided by Leu19, Arg20, Gly61, Lys64, Thr65, Thr66, Arg170, Tyr180, and Arg217. Thr65 contributes to the Mg(2+) binding site. The interval Asn181–Gly251 is small ATPAse domain (RuvB-S). The segment at Asp254–Phe341 is head domain (RuvB-H). 2 residues coordinate DNA: Arg309 and Arg314.

The protein belongs to the RuvB family. In terms of assembly, homohexamer. Forms an RuvA(8)-RuvB(12)-Holliday junction (HJ) complex. HJ DNA is sandwiched between 2 RuvA tetramers; dsDNA enters through RuvA and exits via RuvB. An RuvB hexamer assembles on each DNA strand where it exits the tetramer. Each RuvB hexamer is contacted by two RuvA subunits (via domain III) on 2 adjacent RuvB subunits; this complex drives branch migration. In the full resolvosome a probable DNA-RuvA(4)-RuvB(12)-RuvC(2) complex forms which resolves the HJ.

It localises to the cytoplasm. It carries out the reaction ATP + H2O = ADP + phosphate + H(+). The RuvA-RuvB-RuvC complex processes Holliday junction (HJ) DNA during genetic recombination and DNA repair, while the RuvA-RuvB complex plays an important role in the rescue of blocked DNA replication forks via replication fork reversal (RFR). RuvA specifically binds to HJ cruciform DNA, conferring on it an open structure. The RuvB hexamer acts as an ATP-dependent pump, pulling dsDNA into and through the RuvAB complex. RuvB forms 2 homohexamers on either side of HJ DNA bound by 1 or 2 RuvA tetramers; 4 subunits per hexamer contact DNA at a time. Coordinated motions by a converter formed by DNA-disengaged RuvB subunits stimulates ATP hydrolysis and nucleotide exchange. Immobilization of the converter enables RuvB to convert the ATP-contained energy into a lever motion, pulling 2 nucleotides of DNA out of the RuvA tetramer per ATP hydrolyzed, thus driving DNA branch migration. The RuvB motors rotate together with the DNA substrate, which together with the progressing nucleotide cycle form the mechanistic basis for DNA recombination by continuous HJ branch migration. Branch migration allows RuvC to scan DNA until it finds its consensus sequence, where it cleaves and resolves cruciform DNA. This chain is Holliday junction branch migration complex subunit RuvB, found in Leptospira borgpetersenii serovar Hardjo-bovis (strain L550).